The primary structure comprises 372 residues: Maltose/maltodextrin import ATP-binding protein MalK (372 aa).

The ABC transporter domain occupies 4-234 (VTLKNVCKAY…PQNRFVAGFI (231 aa)). Residue 36–43 (GPSGCGKS) participates in ATP binding.

The protein belongs to the ABC transporter superfamily. Maltooligosaccharide importer (TC 3.A.1.1.1) family. In terms of assembly, the complex is composed of two ATP-binding proteins (MalK), two transmembrane proteins (MalG and MalK) and a solute-binding protein (MalE).

The protein resides in the cell inner membrane. The catalysed reaction is D-maltose(out) + ATP + H2O = D-maltose(in) + ADP + phosphate + H(+). In terms of biological role, part of the ABC transporter complex MalEFGK involved in maltose/maltodextrin import. Responsible for energy coupling to the transport system. This chain is Maltose/maltodextrin import ATP-binding protein MalK, found in Vibrio parahaemolyticus serotype O3:K6 (strain RIMD 2210633).